The sequence spans 103 residues: Co-chaperonin GroES (103 aa).

The protein belongs to the GroES chaperonin family. As to quaternary structure, heptamer of 7 subunits arranged in a ring. Interacts with the chaperonin GroEL.

Its subcellular location is the cytoplasm. Together with the chaperonin GroEL, plays an essential role in assisting protein folding. The GroEL-GroES system forms a nano-cage that allows encapsulation of the non-native substrate proteins and provides a physical environment optimized to promote and accelerate protein folding. GroES binds to the apical surface of the GroEL ring, thereby capping the opening of the GroEL channel. The chain is Co-chaperonin GroES from Synechococcus elongatus (strain ATCC 33912 / PCC 7942 / FACHB-805) (Anacystis nidulans R2).